Reading from the N-terminus, the 431-residue chain is Histidine--tRNA ligase (431 aa).

The protein belongs to the class-II aminoacyl-tRNA synthetase family.

It localises to the cytoplasm. The catalysed reaction is tRNA(His) + L-histidine + ATP = L-histidyl-tRNA(His) + AMP + diphosphate + H(+). This chain is Histidine--tRNA ligase (hisS), found in Pyrococcus horikoshii (strain ATCC 700860 / DSM 12428 / JCM 9974 / NBRC 100139 / OT-3).